The sequence spans 659 residues: Putative RING finger protein R311 (659 aa).

An RING-type zinc finger spans residues 502–540 (CPVCYDDDYIKTKLICGHTVCLTCVLNILPNSKGCPLCM).

The chain is Putative RING finger protein R311 from Acanthamoeba polyphaga (Amoeba).